Consider the following 559-residue polypeptide: 2,3-bisphosphoglycerate-independent phosphoglycerate mutase (559 aa).

Mn(2+) contacts are provided by Asp28 and Ser81. Residue Ser81 is the Phosphoserine intermediate of the active site. Substrate contacts are provided by residues His140, 170–171, Arg206, Arg213, 286–289, and Lys361; these read RD and RADR. Residues Asp430, His434, Asp471, His472, and His501 each coordinate Mn(2+).

Belongs to the BPG-independent phosphoglycerate mutase family. As to quaternary structure, monomer. Mn(2+) is required as a cofactor. The N-terminus is blocked. In terms of tissue distribution, found ubiquitously in germinating seed.

Its subcellular location is the cytoplasm. It carries out the reaction (2R)-2-phosphoglycerate = (2R)-3-phosphoglycerate. The protein operates within carbohydrate degradation; glycolysis; pyruvate from D-glyceraldehyde 3-phosphate: step 3/5. Catalyzes the interconversion of 2-phosphoglycerate and 3-phosphoglycerate. The chain is 2,3-bisphosphoglycerate-independent phosphoglycerate mutase from Zea mays (Maize).